A 359-amino-acid polypeptide reads, in one-letter code: F-box/kelch-repeat protein At1g15670 (359 aa).

Residues Glu-2–Ala-49 enclose the F-box domain. 5 Kelch repeats span residues Asp-119–Ser-167, Asn-170–Gly-217, Phe-219–Gly-269, Asn-271–Arg-310, and Asn-313–Glu-358.

This chain is F-box/kelch-repeat protein At1g15670, found in Arabidopsis thaliana (Mouse-ear cress).